A 200-amino-acid polypeptide reads, in one-letter code: COMM domain-containing protein 7 (200 aa).

Positions Gln133 to Ser200 constitute a COMM domain.

The protein belongs to the COMM domain-containing protein 7 family. In terms of assembly, component of the commander complex consisting of the CCC subcomplex and the retriever subcomplex. Component of the CCC (COMMD/CCDC22/CCDC93) subcomplex consisting of COMMD1, COMMD2, COMMD3, COMMD4, COMMD5, COMMD6, COMMD7, COMMD8, COMMD9, COMMD10, CCDC22 and CCDC93; within the complex forms a heterodimer with COMMD9. Interacts with RELA. Interacts with CCDC22, CCDC93, SCNN1B, CUL7.

It localises to the cytoplasmic vesicle. Functionally, scaffold protein in the commander complex that is essential for endosomal recycling of transmembrane cargos; the commander complex is composed of the CCC subcomplex and the retriever subcomplex. May modulate activity of cullin-RING E3 ubiquitin ligase (CRL) complexes. Associates with the NF-kappa-B complex and suppresses its transcriptional activity. The protein is COMM domain-containing protein 7 (Commd7) of Mus musculus (Mouse).